The following is a 578-amino-acid chain: MACGFRRSIASQLSRVLDLPPENLIKSISAVPISRKEEVADFQLSVDSLLENNNDHSRPDIQIQAMRLAEKLKCDTVVSEISTGQGTVNFKINRELLTKTVLQQVIEDGSKYGLKSELFSGLPKKRIVVEFSSPNVAKKFHVGHLRSTIIGNFIANLKEALGHQVTRINYLGDWGMQFGLLGTGFQLFGYEEKLQSSPLQHLFEVYVQVNKEAADDKNVAKSAHEFFQRLELGDMQALALWQKFRDLSIDEYMRIYQRLGVHFDEYSGESFYREKSQEVLKLLDSKGLLQKTLKGTAVVDLSGNGDPSSVCTVMRSDGTSLYATRDLAAAIDRMEKYNFDKMIYVTDKGQKKHFQQVFQILQIMGYDWAERCQHVPFGVVQGMKTRRGDVTFLEDVLNEIRLRMLQNMASIKTTKELENPEETAEQVGLAALIIQDFRGFLLSDYQFSWDRVFQSRGDTGVFLQYTHARLHSLEETFGCGYLNDFNTACLQEPQSVSILQHLLRFDEVLYRSSQDLQPRHIVSYLLTLSHLAAVAHRTLHVRNSPPEVAGARLHLFRAVRSVLANGMKLLGITPVCRM.

Residues 1-16 (MACGFRRSIASQLSRV) constitute a mitochondrion transit peptide. Residues 133 to 135 (SPN), histidine 144, tyrosine 322, aspartate 326, and glutamine 350 each bind L-arginine. Residues 133–144 (SPNVAKKFHVGH) carry the 'HIGH' region motif. Lysine 568 carries the post-translational modification N6-acetyllysine.

The protein belongs to the class-I aminoacyl-tRNA synthetase family.

Its subcellular location is the mitochondrion membrane. It carries out the reaction tRNA(Arg) + L-arginine + ATP = L-arginyl-tRNA(Arg) + AMP + diphosphate. Catalyzes the attachment of arginine to tRNA(Arg) in a two-step reaction: arginine is first activated by ATP to form Arg-AMP and then transferred to the acceptor end of tRNA(Arg). The polypeptide is Probable arginine--tRNA ligase, mitochondrial (RARS2) (Bos taurus (Bovine)).